Here is a 314-residue protein sequence, read N- to C-terminus: Malate dehydrogenase (314 aa).

Residues 7–12 (GAGNVG) and Asp32 each bind NAD(+). Arg81 and Arg87 together coordinate substrate. NAD(+) contacts are provided by residues Asn94 and 117–119 (VAN). Asn119 and Arg150 together coordinate substrate. His174 (proton acceptor) is an active-site residue.

The protein belongs to the LDH/MDH superfamily. MDH type 3 family.

The enzyme catalyses (S)-malate + NAD(+) = oxaloacetate + NADH + H(+). Its function is as follows. Catalyzes the reversible oxidation of malate to oxaloacetate. The protein is Malate dehydrogenase of Salinibacter ruber (strain DSM 13855 / M31).